Reading from the N-terminus, the 145-residue chain is Meiotically up-regulated gene 124 protein (145 aa).

2 helical membrane-spanning segments follow: residues 18-38 (IILT…CPSI) and 95-115 (FAWS…NFFL).

It is found in the membrane. In terms of biological role, has a role in meiosis. This chain is Meiotically up-regulated gene 124 protein (mug124), found in Schizosaccharomyces pombe (strain 972 / ATCC 24843) (Fission yeast).